The primary structure comprises 332 residues: 2,3-diketo-L-gulonate reductase (332 aa).

His-44 functions as the Proton donor in the catalytic mechanism. Residues 168–174 (ITMVDMS), 224–225 (WK), and 304–306 (GHE) each bind NAD(+).

Belongs to the LDH2/MDH2 oxidoreductase family. DlgD subfamily. In terms of assembly, homodimer.

Its subcellular location is the cytoplasm. It catalyses the reaction 3-dehydro-L-gulonate + NAD(+) = 2,3-dioxo-L-gulonate + NADH + H(+). The enzyme catalyses 3-dehydro-L-gulonate + NADP(+) = 2,3-dioxo-L-gulonate + NADPH + H(+). Functionally, catalyzes the reduction of 2,3-diketo-L-gulonate in the presence of NADH, to form 3-keto-L-gulonate. This Salmonella agona (strain SL483) protein is 2,3-diketo-L-gulonate reductase.